We begin with the raw amino-acid sequence, 242 residues long: N-alpha-acetyltransferase 60 (242 aa).

Residues 1–192 (MSEEERPAAL…GGHPPWTVMD (192 aa)) are Cytoplasmic-facing. Residues 13–182 (TILRFLCHDD…DAYTYVLYLN (170 aa)) form the N-acetyltransferase domain. Tyrosine 38 serves as a coordination point for substrate. Residue tyrosine 97 is part of the active site. Leucine 99 serves as a coordination point for substrate. Acetyl-CoA contacts are provided by residues 101–103 (LGV) and 109–114 (KQGIGS). Histidine 138 is an active-site residue. Residues asparagine 143 and 150-153 (YENR) contribute to the acetyl-CoA site. Positions 162–173 (PYYYSIRGVLQD) are required for homodimerization. Position 165 (tyrosine 165) interacts with substrate. An intramembrane region (helical) is located at residues 193–236 (YLQHLGSALAGFSPCTLPQRIYRQAHTLLRSLLPWSSISAKSGI). Residues 237–242 (EYSRTM) lie on the Cytoplasmic side of the membrane.

The protein belongs to the acetyltransferase family. NAA60 subfamily. As to quaternary structure, monomer and homodimer; monomer in presence of substrate and homodimer in its absence.

The protein localises to the golgi apparatus membrane. It carries out the reaction N-terminal L-methionyl-[transmembrane protein] + acetyl-CoA = N-terminal N(alpha)-acetyl-L-methionyl-[transmembrane protein] + CoA + H(+). It catalyses the reaction L-lysyl-[protein] + acetyl-CoA = N(6)-acetyl-L-lysyl-[protein] + CoA + H(+). Its function is as follows. N-alpha-acetyltransferase that specifically mediates the acetylation of N-terminal residues of the transmembrane proteins, with a strong preference for N-termini facing the cytosol. Displays N-terminal acetyltransferase activity towards a range of N-terminal sequences including those starting with Met-Lys, Met-Val, Met-Ala and Met-Met. Required for normal chromosomal segregation during anaphase. May also show histone acetyltransferase activity; such results are however unclear in vivo and would require additional experimental evidences. This chain is N-alpha-acetyltransferase 60 (naa60), found in Xenopus tropicalis (Western clawed frog).